Consider the following 139-residue polypeptide: Acidic phospholipase A2 BpPLA2-TXI (139 aa).

The first 16 residues, 1 to 16, serve as a signal peptide directing secretion; that stretch reads MRTLWIMAVLLVGVEG. Cysteines 44 and 60 form a disulfide. Ca(2+) is bound by residues Gly-45 and Gly-47. Residue His-63 is part of the active site. Residue Asp-64 coordinates Ca(2+). Disulfide bonds link Cys-65-Cys-139, Cys-73-Cys-97, and Cys-91-Cys-102.

The protein belongs to the phospholipase A2 family. Group II subfamily. D49 sub-subfamily. Ca(2+) is required as a cofactor. Expressed by the venom gland.

It localises to the secreted. It carries out the reaction a 1,2-diacyl-sn-glycero-3-phosphocholine + H2O = a 1-acyl-sn-glycero-3-phosphocholine + a fatty acid + H(+). Functionally, PLA2 catalyzes the calcium-dependent hydrolysis of the 2-acyl groups in 3-sn-phosphoglycerides. This Bothrops pauloensis (Neuwied's lancehead) protein is Acidic phospholipase A2 BpPLA2-TXI.